The sequence spans 210 residues: Probable GTP-binding protein EngB (210 aa).

Residues 25–199 (TGIEVAFAGR…RQKLDTWFSE (175 aa)) enclose the EngB-type G domain. GTP is bound by residues 33-40 (GRSNAGKS), 60-64 (GRTQL), 78-81 (DLPG), 145-148 (TKAD), and 178-180 (FSS). The Mg(2+) site is built by serine 40 and threonine 62.

The protein belongs to the TRAFAC class TrmE-Era-EngA-EngB-Septin-like GTPase superfamily. EngB GTPase family. Requires Mg(2+) as cofactor.

Its function is as follows. Necessary for normal cell division and for the maintenance of normal septation. The sequence is that of Probable GTP-binding protein EngB from Shigella flexneri.